The chain runs to 325 residues: Aldo-keto reductase family 1 member A1 (325 aa).

The residue at position 2 (T2) is an N-acetylthreonine. Phosphoserine is present on S4. NADP(+)-binding positions include 11-20, T21, and W22; that span reads GQKMPLIGLG. Position 38 is a phosphoserine (S38). D45 lines the NADP(+) pocket. Y50 (proton donor) is an active-site residue. Position 127 is an N6-acetyllysine; alternate (K127). At K127 the chain carries N6-succinyllysine; alternate. The residue at position 145 (K145) is an N6-succinyllysine. NADP(+) contacts are provided by S162, N163, S211, L213, S215, S216, K263, S264, I265, R269, Q272, and N273. At S211 the chain carries Phosphoserine.

The protein belongs to the aldo/keto reductase family. As to quaternary structure, monomer. In terms of tissue distribution, widely expressed.

The protein resides in the cytoplasm. Its subcellular location is the cytosol. The protein localises to the apical cell membrane. The catalysed reaction is a primary alcohol + NADP(+) = an aldehyde + NADPH + H(+). It carries out the reaction L-gulonate + NADP(+) = aldehydo-D-glucuronate + NADPH + H(+). The enzyme catalyses L-gulono-1,4-lactone + NADP(+) = D-glucurono-3,6-lactone + NADPH + H(+). It catalyses the reaction allyl alcohol + NADP(+) = acrolein + NADPH + H(+). The catalysed reaction is glycerol + NADP(+) = D-glyceraldehyde + NADPH + H(+). It carries out the reaction glycerol + NADP(+) = L-glyceraldehyde + NADPH + H(+). The enzyme catalyses hydroxyacetone + NADP(+) = methylglyoxal + NADPH + H(+). It catalyses the reaction 3-deoxyfructose + NADP(+) = 3-deoxyglucosone + NADPH + H(+). The catalysed reaction is (R)-mevalonate + NADP(+) = (R)-mevaldate + NADPH + H(+). It carries out the reaction pyridine 3-methanol + NADP(+) = pyridine-3-carbaldehyde + NADPH + H(+). The enzyme catalyses S-nitroso-CoA + NADPH + H(+) = sulfinamide-CoA + NADP(+). It catalyses the reaction S-nitrosoglutathione + NADPH + H(+) = S-(hydroxysulfenamide)glutathione + NADP(+). Its function is as follows. Catalyzes the NADPH-dependent reduction of a wide variety of carbonyl-containing compounds to their corresponding alcohols. Displays enzymatic activity towards endogenous metabolites such as aromatic and aliphatic aldehydes, ketones, monosaccharides and bile acids, with a preference for negatively charged substrates, such as glucuronate and succinic semialdehyde. Plays an important role in ascorbic acid biosynthesis by catalyzing the reduction of D-glucuronic acid and D-glucurono-gamma-lactone. Functions as a detoxifiying enzyme by reducing a range of toxic aldehydes. Reduces methylglyoxal and 3-deoxyglucosone, which are present at elevated levels under hyperglycemic conditions and are cytotoxic. Involved in the detoxification of lipid-derived aldehydes like acrolein. Plays a role in the activation of procarcinogens, such as polycyclic aromatic hydrocarbon trans-dihydrodiols, and in the metabolism of various xenobiotics and drugs. Also acts as an inhibitor of protein S-nitrosylation by mediating degradation of S-nitroso-coenzyme A (S-nitroso-CoA), a cofactor required to S-nitrosylate proteins. S-nitroso-CoA reductase activity is involved in reprogramming intermediary metabolism in renal proximal tubules, notably by inhibiting protein S-nitrosylation of isoform 2 of PKM (PKM2). Also acts as a S-nitroso-glutathione reductase by catalyzing the NADPH-dependent reduction of S-nitrosoglutathione. Displays no reductase activity towards retinoids. This chain is Aldo-keto reductase family 1 member A1, found in Mus musculus (Mouse).